Consider the following 534-residue polypeptide: CTP synthase (534 aa).

The interval M1 to L269 is amidoligase domain. S17 contacts CTP. A UTP-binding site is contributed by S17. S18–V23 contacts ATP. L-glutamine is bound at residue Y58. Residue D75 participates in ATP binding. D75 and E143 together coordinate Mg(2+). CTP is bound by residues D150–E152, K190–Q195, and K226. Residues K190–Q195 and K226 each bind UTP. The Glutamine amidotransferase type-1 domain maps to D294 to E532. G352 serves as a coordination point for L-glutamine. C379 (nucleophile; for glutamine hydrolysis) is an active-site residue. Residues L380 to Q383, E403, and R460 contribute to the L-glutamine site. Active-site residues include H505 and E507.

This sequence belongs to the CTP synthase family. Homotetramer.

It catalyses the reaction UTP + L-glutamine + ATP + H2O = CTP + L-glutamate + ADP + phosphate + 2 H(+). The enzyme catalyses L-glutamine + H2O = L-glutamate + NH4(+). The catalysed reaction is UTP + NH4(+) + ATP = CTP + ADP + phosphate + 2 H(+). It functions in the pathway pyrimidine metabolism; CTP biosynthesis via de novo pathway; CTP from UDP: step 2/2. Its activity is regulated as follows. Allosterically activated by GTP, when glutamine is the substrate; GTP has no effect on the reaction when ammonia is the substrate. The allosteric effector GTP functions by stabilizing the protein conformation that binds the tetrahedral intermediate(s) formed during glutamine hydrolysis. Inhibited by the product CTP, via allosteric rather than competitive inhibition. Catalyzes the ATP-dependent amination of UTP to CTP with either L-glutamine or ammonia as the source of nitrogen. Regulates intracellular CTP levels through interactions with the four ribonucleotide triphosphates. The polypeptide is CTP synthase (Hydrogenobaculum sp. (strain Y04AAS1)).